We begin with the raw amino-acid sequence, 246 residues long: MYQDSFYILNSAFSLSEIEVGAHLYWEVAGLKLHGQVFIVSWLVIAALIGFALVGTKDLKQAPQGIQNFMEYVYEFLQDIAKNQIGEEEYRPWVPYIATVFLFIFGANWAGALIPWKLIQLPEGELAAPTNDINVTVALALLTSLSYFYAGLSKKGIGYFARYVQPTPILLPINILEDFTKPLSLSFRLFGNVLADELVVSVFALLVPILIPLPVMTLGLFASSVQALIFSTLSAAYIGEALEDHH.

4 helical membrane passes run 35–55 (GQVFIVSWLVIAALIGFALVG), 94–114 (VPYIATVFLFIFGANWAGALI), 133–153 (INVTVALALLTSLSYFYAGLS), and 202–222 (VFALLVPILIPLPVMTLGLFA).

It belongs to the ATPase A chain family. F-type ATPases have 2 components, CF(1) - the catalytic core - and CF(0) - the membrane proton channel. CF(1) has five subunits: alpha(3), beta(3), gamma(1), delta(1), epsilon(1). CF(0) has four main subunits: a, b, b' and c.

It is found in the plastid. The protein resides in the chloroplast thylakoid membrane. In terms of biological role, key component of the proton channel; it plays a direct role in the translocation of protons across the membrane. In Rhodomonas salina (Cryptomonas salina), this protein is ATP synthase subunit a, chloroplastic.